We begin with the raw amino-acid sequence, 372 residues long: Solute carrier family 35 member F6 (372 aa).

The N-terminal stretch at 1–18 (MAWTKYQLFLAGLMLVTG) is a signal peptide. A run of 2 helical transmembrane segments spans residues 48 to 68 (FVQA…FYLL) and 89 to 109 (LLFL…YVAL). Positions 105–160 (MYVALNMTSASSFQMLRGAVIIFTGLFSVAFLDRRLAPSQWLGILITIAGLVVVGL) constitute an EamA domain. The N-linked (GlcNAc...) asparagine glycan is linked to N110. Helical transmembrane passes span 116 to 136 (SFQM…VAFL), 145 to 165 (WLGI…DLLS), 176 to 196 (VITG…QMVL), 211 to 231 (AVGI…VPMF), 261 to 281 (LIAL…FSGI), 293 to 312 (MVLD…ALGW), and 320 to 336 (ILGF…YNGL). T366 carries the post-translational modification Phosphothreonine.

It belongs to the SLC35F solute transporter family. In terms of assembly, interacts with SLC25A5.

It localises to the mitochondrion. The protein localises to the lysosome membrane. Involved in the maintenance of mitochondrial membrane potential in pancreatic ductal adenocarcinoma (PDAC) cells. Promotes pancreatic ductal adenocarcinoma (PDAC) cell growth. May play a role as a nucleotide-sugar transporter. The chain is Solute carrier family 35 member F6 (Slc35f6) from Mus musculus (Mouse).